A 284-amino-acid chain; its full sequence is 4-diphosphocytidyl-2-C-methyl-D-erythritol kinase (284 aa).

Lys-14 is a catalytic residue. Pro-98 to Ser-108 is an ATP binding site. Residue Asp-140 is part of the active site.

Belongs to the GHMP kinase family. IspE subfamily.

It catalyses the reaction 4-CDP-2-C-methyl-D-erythritol + ATP = 4-CDP-2-C-methyl-D-erythritol 2-phosphate + ADP + H(+). It functions in the pathway isoprenoid biosynthesis; isopentenyl diphosphate biosynthesis via DXP pathway; isopentenyl diphosphate from 1-deoxy-D-xylulose 5-phosphate: step 3/6. Functionally, catalyzes the phosphorylation of the position 2 hydroxy group of 4-diphosphocytidyl-2C-methyl-D-erythritol. In Shewanella denitrificans (strain OS217 / ATCC BAA-1090 / DSM 15013), this protein is 4-diphosphocytidyl-2-C-methyl-D-erythritol kinase.